A 298-amino-acid chain; its full sequence is ATP synthase gamma chain (298 aa).

The protein belongs to the ATPase gamma chain family. As to quaternary structure, F-type ATPases have 2 components, CF(1) - the catalytic core - and CF(0) - the membrane proton channel. CF(1) has five subunits: alpha(3), beta(3), gamma(1), delta(1), epsilon(1). CF(0) has three main subunits: a, b and c.

It localises to the cell inner membrane. Functionally, produces ATP from ADP in the presence of a proton gradient across the membrane. The gamma chain is believed to be important in regulating ATPase activity and the flow of protons through the CF(0) complex. The protein is ATP synthase gamma chain of Francisella tularensis subsp. tularensis (strain WY96-3418).